The chain runs to 351 residues: Pentatricopeptide repeat-containing protein At3g56030, mitochondrial (351 aa).

Residues 1 to 41 (MFRLKPLISVDLNQTMSLLRRFVKEANNSRFLLQSISGRSF) constitute a mitochondrion transit peptide. PPR repeat units lie at residues 124-158 (RKHS…EFGL), 159-193 (STCV…AIPV), 194-224 (DVTS…MEEE), and 232-266 (DTRT…GLSV).

The protein belongs to the PPR family. P subfamily.

It is found in the mitochondrion. The chain is Pentatricopeptide repeat-containing protein At3g56030, mitochondrial from Arabidopsis thaliana (Mouse-ear cress).